The primary structure comprises 1250 residues: DNA excision repair protein ERCC-6-like (1250 aa).

Phosphoserine is present on Ser-14. The stretch at 21–54 is one TPR 1 repeat; it reads YLRYVKEAKEATKNGDLEEAFKLFNLAKDIFPNE. The 169-residue stretch at 109–277 folds into the Helicase ATP-binding domain; it reads SLYRDGRKGG…WSLFDFACQG (169 aa). 122-129 serves as a coordination point for ATP; sequence DDMGLGKT. Positions 228–231 match the DEAH box motif; the sequence is DEAH. One can recognise a Helicase C-terminal domain in the interval 464–620; that stretch reads FLMDLLKRLR…EKKNPFRYFS (157 aa). A disordered region spans residues 735–768; it reads VFPSSTKKKCPKLNKPQPQPSPLLSTHHTQEEDI. Phosphoserine is present on residues Ser-755, Ser-774, Ser-807, and Ser-810. Thr-813 carries the phosphothreonine modification. Phosphoserine is present on Ser-820. The segment at 926–946 is disordered; sequence SALQDAQASEAKLEEEPSASS. Phosphoserine occurs at positions 969, 971, 995, 1004, and 1028. Positions 1061–1092 are disordered; it reads ASTPKNDISPPGRFFSSQIPSSVNKSMNSRRS. Thr-1063 bears the Phosphothreonine; by PLK1 mark. Ser-1069 is subject to Phosphoserine. Polar residues predominate over residues 1075-1087; it reads FSSQIPSSVNKSM. Residues Ser-1098 and Ser-1118 each carry the phosphoserine modification. Positions 1110–1199 are disordered; the sequence is MEERLDDSSE…QDKAAEATND (90 aa). Residues 1115-1124 are compositionally biased toward basic and acidic residues; sequence DDSSEAKGPE. Residues 1125-1135 are compositionally biased toward acidic residues; the sequence is DYPEEGVEESS. Polar residues predominate over residues 1149 to 1173; that stretch reads ETLSSENKSSWLMTSKPSALAQETS. Phosphoserine occurs at positions 1181 and 1188. One copy of the TPR 2 repeat lies at 1200–1233; that stretch reads YETLVKRGKELKECGKIQEALNCLVKALDIKSAD.

The protein belongs to the SNF2/RAD54 helicase family. As to quaternary structure, interacts with PLK1, which phosphorylates it. Both proteins are mutually dependent on each other for correct subcellular localization. Interacts (via N-terminal TPR repeat) with BEND3 (via BEN domains 1 and 3); the interaction is direct. Phosphorylation by PLK1 prevents the association with chromosome arms and restricts its localization to the kinetochore-centromere region.

It is found in the chromosome. Its subcellular location is the centromere. It localises to the kinetochore. It carries out the reaction ATP + H2O = ADP + phosphate + H(+). In terms of biological role, DNA helicase that acts as a tension sensor that associates with catenated DNA which is stretched under tension until it is resolved during anaphase. Functions as ATP-dependent DNA translocase. Can promote Holliday junction branch migration (in vitro). The protein is DNA excision repair protein ERCC-6-like (ERCC6L) of Homo sapiens (Human).